The chain runs to 479 residues: Sulfate adenylyltransferase subunit 1 (479 aa).

Residues 25–239 (KSLLRFLTCG…EVLETVDIQR (215 aa)) form the tr-type G domain. The tract at residues 34 to 41 (GSVDDGKS) is G1. 34–41 (GSVDDGKS) contributes to the GTP binding site. Positions 92-96 (GITID) are G2. Residues 113–116 (DTPG) are G3. Residues 113–117 (DTPGH) and 168–171 (NKMD) contribute to the GTP site. The G4 stretch occupies residues 168–171 (NKMD). Positions 206–208 (SAL) are G5.

It belongs to the TRAFAC class translation factor GTPase superfamily. Classic translation factor GTPase family. CysN/NodQ subfamily. In terms of assembly, heterodimer composed of CysD, the smaller subunit, and CysN.

The enzyme catalyses sulfate + ATP + H(+) = adenosine 5'-phosphosulfate + diphosphate. The protein operates within sulfur metabolism; hydrogen sulfide biosynthesis; sulfite from sulfate: step 1/3. Its function is as follows. With CysD forms the ATP sulfurylase (ATPS) that catalyzes the adenylation of sulfate producing adenosine 5'-phosphosulfate (APS) and diphosphate, the first enzymatic step in sulfur assimilation pathway. APS synthesis involves the formation of a high-energy phosphoric-sulfuric acid anhydride bond driven by GTP hydrolysis by CysN coupled to ATP hydrolysis by CysD. This is Sulfate adenylyltransferase subunit 1 from Salmonella heidelberg (strain SL476).